We begin with the raw amino-acid sequence, 21 residues long: 40 kDa major outer membrane protein (21 aa).

As to quaternary structure, disulfide bond interactions within and between MOMP molecules and other components form high molecular-weight oligomers.

Its subcellular location is the cell outer membrane. In terms of biological role, structural rigidity of the outer membrane of elementary bodies and porin forming, permitting diffusion of solutes through the intracellular reticulate body membrane. The polypeptide is 40 kDa major outer membrane protein (Actinobacillus pleuropneumoniae (Haemophilus pleuropneumoniae)).